A 388-amino-acid polypeptide reads, in one-letter code: Putative pyridoxal phosphate-dependent aminotransferase EpsN (388 aa).

Lys-190 is subject to N6-(pyridoxal phosphate)lysine.

Belongs to the DegT/DnrJ/EryC1 family. Pyridoxal 5'-phosphate serves as cofactor.

In terms of biological role, may be involved in the production of the exopolysaccharide (EPS) component of the extracellular matrix during biofilm formation. EPS is responsible for the adhesion of chains of cells into bundles. The sequence is that of Putative pyridoxal phosphate-dependent aminotransferase EpsN (epsN) from Bacillus subtilis (strain 168).